The primary structure comprises 285 residues: Hypersensitive-induced response protein 3 (285 aa).

Residue G2 is the site of N-myristoyl glycine attachment. Coiled coils occupy residues 113–139 and 165–185; these read NLDD…MTAY and NAAA…KIIQ.

Self-interacts and forms heteromers. Interacts with NB-LRR class of R proteins before R proteins (e.g. RPS2 or RPM1) are activated by the effectors.

Its subcellular location is the cell membrane. The protein is Hypersensitive-induced response protein 3 (HIR3) of Arabidopsis thaliana (Mouse-ear cress).